The sequence spans 113 residues: ATP synthase epsilon chain (113 aa).

This sequence belongs to the ATPase epsilon chain family. As to quaternary structure, F-type ATPases have 2 components, CF(1) - the catalytic core - and CF(0) - the membrane proton channel. CF(1) has five subunits: alpha(3), beta(3), gamma(1), delta(1), epsilon(1). CF(0) has three main subunits: a, b and c.

It is found in the cell membrane. Functionally, produces ATP from ADP in the presence of a proton gradient across the membrane. In Wolbachia pipientis subsp. Culex pipiens (strain wPip), this protein is ATP synthase epsilon chain.